The primary structure comprises 458 residues: Argininosuccinate lyase (458 aa).

The protein belongs to the lyase 1 family. Argininosuccinate lyase subfamily.

It is found in the cytoplasm. The catalysed reaction is 2-(N(omega)-L-arginino)succinate = fumarate + L-arginine. Its pathway is amino-acid biosynthesis; L-arginine biosynthesis; L-arginine from L-ornithine and carbamoyl phosphate: step 3/3. This Salmonella paratyphi B (strain ATCC BAA-1250 / SPB7) protein is Argininosuccinate lyase.